We begin with the raw amino-acid sequence, 73 residues long: uncharacterized protein (73 aa).

Belongs to the asfivirus I73R family.

It is found in the virion. This is an uncharacterized protein from Ornithodoros (relapsing fever ticks).